We begin with the raw amino-acid sequence, 283 residues long: Elongation factor Ts (283 aa).

Residues 80 to 83 are involved in Mg(2+) ion dislocation from EF-Tu; that stretch reads TDFV.

Belongs to the EF-Ts family.

The protein localises to the cytoplasm. Associates with the EF-Tu.GDP complex and induces the exchange of GDP to GTP. It remains bound to the aminoacyl-tRNA.EF-Tu.GTP complex up to the GTP hydrolysis stage on the ribosome. In Cronobacter sakazakii (strain ATCC BAA-894) (Enterobacter sakazakii), this protein is Elongation factor Ts.